The sequence spans 1283 residues: Oxysterol-binding protein homolog 2 (1283 aa).

Serine 2 is modified (N-acetylserine). Serine 7 is modified (phosphoserine). ANK repeat units lie at residues 106 to 134 and 206 to 235; these read NGNT…SIND and TGTT…EATV. The PH domain occupies 289 to 386; that stretch reads PPTYKGFLKK…WVNAIQSAIR (98 aa). Serine 422, serine 445, serine 451, serine 455, serine 458, serine 459, and serine 486 each carry phosphoserine. A Phosphothreonine modification is found at threonine 488. Composition is skewed to polar residues over residues 504–518 and 530–551; these read SNTL…SGSG and ANLS…NNYI. Disordered regions lie at residues 504-571 and 702-721; these read SNTL…LGIN and TAGN…DTTA. A phosphoserine mark is found at serine 512 and serine 515. Over residues 554–568 the composition is skewed to acidic residues; it reads FEGDEANSDDEEEDL. The segment covering 707–716 has biased composition (basic and acidic residues); it reads ESLENDKEQE. Serine 717 is modified (phosphoserine). Residues 745–751 carry the FFAT motif; it reads EFYDAAE. The disordered stretch occupies residues 767–834; it reads STAAAPKHAP…SLKNFKAEDK (68 aa). Position 783 is a phosphothreonine (threonine 783). Serine 787 is subject to Phosphoserine. Basic and acidic residues-rich tracts occupy residues 791–810 and 818–834; these read QDEK…KFEK and DEPK…AEDK. 2 positions are modified to phosphoserine: serine 825 and serine 1151. Positions 897-1268 are OSBP-related domain (ORD); it reads SLWAVLKSMV…KYWRYTGKYW (372 aa).

This sequence belongs to the OSBP family. Interacts with SCS2.

It is found in the cell membrane. It localises to the endoplasmic reticulum membrane. Lipid transport protein (LTP) involved in non-vesicular transfer of lipids between membranes. Functions in phosphoinositide-coupled directional transport of various lipids by carrying the lipid molecule in a hydrophobic pocket and transferring it between membranes through the cytosol. Involved in maintenance of intracellular sterol distribution and homeostasis. Binds and transports sterol. Plays a role in the positive regulation of vesicular transport of ceramide from the ER to the Golgi, negatively regulating COPII-mediated ER export of cargos. In Saccharomyces cerevisiae (strain ATCC 204508 / S288c) (Baker's yeast), this protein is Oxysterol-binding protein homolog 2.